We begin with the raw amino-acid sequence, 287 residues long: Orotidine 5'-phosphate decarboxylase (287 aa).

The active-site Proton donor is Lys97.

The protein belongs to the OMP decarboxylase family. Type 2 subfamily.

It catalyses the reaction orotidine 5'-phosphate + H(+) = UMP + CO2. The protein operates within pyrimidine metabolism; UMP biosynthesis via de novo pathway; UMP from orotate: step 2/2. This chain is Orotidine 5'-phosphate decarboxylase, found in Clostridium perfringens (strain SM101 / Type A).